The primary structure comprises 393 residues: MAAVTVEAIRKAQRADGPAAVLAIGTATPANYVTQADYPDYYFRITKSEHMTELKEKFKRMCDKSMIRKRYMHLTEDILKENPNMCAYMAPSLDARQDIVVVEVPKLGKEAAVKAIKEWGQPKSKITHLIFCTTSGVDMPGCDYQLTKLLGLRPSVKRFMMYQQGCFAGGTVLRLAKDLAENNRGARVLVVCSEITAVTFRGPADTHLDSLVGQALFGDGAAAVIVGADPDESIERPLYQLVSAAQTILPDSDGAIDGHLREVGLTFHLLKDVPGLISKNIEKSLKEAFGPIGISDWNSIFWIAHPGGPAILDQVEAKLGLKEEKLRATRQVLSEYGNMSSACVLFILDEMRKNCAEEGRATTGEGLDWGVLFGFGPGLTVETVVLRSVPIKA.

Cys-166 is a catalytic residue.

Belongs to the thiolase-like superfamily. Chalcone/stilbene synthases family.

It carries out the reaction (E)-4-coumaroyl-CoA + 3 malonyl-CoA + 3 H(+) = 2',4,4',6'-tetrahydroxychalcone + 3 CO2 + 4 CoA. Its pathway is secondary metabolite biosynthesis; flavonoid biosynthesis. The primary product of this enzyme is 4,2',4',6'-tetrahydroxychalcone (also termed naringenin-chalcone or chalcone) which can under specific conditions spontaneously isomerize into naringenin. This Ruta graveolens (Common rue) protein is Chalcone synthase 1 (CHS1).